The following is a 234-amino-acid chain: Leucyl/phenylalanyl-tRNA--protein transferase (234 aa).

The protein belongs to the L/F-transferase family.

It is found in the cytoplasm. The catalysed reaction is N-terminal L-lysyl-[protein] + L-leucyl-tRNA(Leu) = N-terminal L-leucyl-L-lysyl-[protein] + tRNA(Leu) + H(+). The enzyme catalyses N-terminal L-arginyl-[protein] + L-leucyl-tRNA(Leu) = N-terminal L-leucyl-L-arginyl-[protein] + tRNA(Leu) + H(+). It catalyses the reaction L-phenylalanyl-tRNA(Phe) + an N-terminal L-alpha-aminoacyl-[protein] = an N-terminal L-phenylalanyl-L-alpha-aminoacyl-[protein] + tRNA(Phe). Functions in the N-end rule pathway of protein degradation where it conjugates Leu, Phe and, less efficiently, Met from aminoacyl-tRNAs to the N-termini of proteins containing an N-terminal arginine or lysine. The sequence is that of Leucyl/phenylalanyl-tRNA--protein transferase from Escherichia coli O157:H7 (strain EC4115 / EHEC).